A 451-amino-acid polypeptide reads, in one-letter code: Serine--tRNA ligase, cytoplasmic (451 aa).

An intrachain disulfide couples C213 to C244. Position 238–240 (238–240 (TAE)) interacts with L-serine. ATP-binding positions include 269–271 (RKE) and V285. An L-serine-binding site is contributed by E292. Residue 358-361 (ELVS) participates in ATP binding. T396 provides a ligand contact to L-serine.

The protein belongs to the class-II aminoacyl-tRNA synthetase family. Type-1 seryl-tRNA synthetase subfamily. In terms of assembly, homodimer. The tRNA molecule binds across the dimer.

Its subcellular location is the cytoplasm. The protein resides in the cytosol. It catalyses the reaction tRNA(Ser) + L-serine + ATP = L-seryl-tRNA(Ser) + AMP + diphosphate + H(+). Functionally, catalyzes the attachment of serine to tRNA(Ser) in a two-step reaction: serine is first activated by ATP to form Ser-AMP and then transferred to the acceptor end of tRNA(Ser). This is Serine--tRNA ligase, cytoplasmic from Arabidopsis thaliana (Mouse-ear cress).